The sequence spans 207 residues: Transcriptional regulatory protein RcsA (207 aa).

The HTH luxR-type domain occupies Ile131–Asp196. Positions Thr155 to Gly174 form a DNA-binding region, H-T-H motif.

This sequence belongs to the RcsA family. Interacts with RcsB.

Functionally, component of the Rcs signaling system, which controls transcription of numerous genes. Binds, with RcsB, to the RcsAB box to regulate expression of genes. This is Transcriptional regulatory protein RcsA from Salmonella typhi.